Reading from the N-terminus, the 85-residue chain is Transcriptional repressor protein KorC (85 aa).

A DNA-binding region (H-T-H motif) is located at residues 28 to 47 (EVLRLAGLTGGKAAKVLGLG).

Acts with KorA as corepressor in the control of the kilC and kilE operons. The sequence is that of Transcriptional repressor protein KorC (korC) from Escherichia coli.